Consider the following 465-residue polypeptide: WAS protein family homolog 2 (465 aa).

Residues 1–54 form a required for WASH complex assembly region; sequence MTPVRMQHSLAGQTYAVPLIQPDLRREEAVQQMADALQYLQKVSGDIFSRISQQ. Positions 1–167 are WHD1; it reads MTPVRMQHSL…EGLGGLPSNI (167 aa). A Glycyl lysine isopeptide (Lys-Gly) (interchain with G-Cter in ubiquitin) cross-link involves residue Lys220. 2 disordered regions span residues 297 to 407 and 422 to 465; these read QDGV…QGGH and GISG…DWES. Residues 302-314 are compositionally biased toward pro residues; it reads TPPPPPPPPPPAP. Residues 349–465 are VCA; that stretch reads QGAPREVVDP…AEEDEDDWES (117 aa). The 23-residue stretch at 361 to 383 folds into the WH2 domain; the sequence is GRATLLESIRQAGGIGKAKLRSM. Residues 382-398 are compositionally biased toward basic and acidic residues; it reads SMKERKLEKKKQKEQEQ. The span at 424 to 436 shows a compositional bias: gly residues; that stretch reads SGKGPGAGEGPGG. Residues 456 to 465 show a composition bias toward acidic residues; sequence AEEDEDDWES.

It belongs to the WASH1 family. Component of the WASH core complex also described as WASH regulatory complex (SHRC) composed of WASH (WASHC1, WASH2P or WASH3P), WASHC2 (WASHC2A or WASHC2C), WASHC3, WASHC4 and WASHC5. The WASH core complex associates with the F-actin-capping protein dimer (formed by CAPZA1, CAPZA2 or CAPZA3 and CAPZB) in a transient or substoichiometric manner which was initially described as WASH complex. Interacts (via WHD1 region) with WASHC2C; the interaction is direct. Interacts with alpha-tubulin. Interacts with BECN1; WASHC1 and AMBRA1 can competitively interact with BECN1. Interacts with BLOC1S2; may associate with the BLOC-1 complex. Interacts with tubulin gamma chain (TUBG1 or TUBG2). Interacts with EXOC1, EXOC4, EXOC8; in MMP14-positive endosomes in breast tumor cells; indicative for an association with the exocyst complex.

The protein resides in the early endosome membrane. The protein localises to the recycling endosome membrane. It localises to the late endosome. Its subcellular location is the cytoplasmic vesicle. It is found in the autophagosome. The protein resides in the cytoplasm. The protein localises to the cytoskeleton. It localises to the microtubule organizing center. Its subcellular location is the centrosome. It is found in the centriole. Acts as a nucleation-promoting factor at the surface of endosomes, where it recruits and activates the Arp2/3 complex to induce actin polymerization, playing a key role in the fission of tubules that serve as transport intermediates during endosome sorting. Involved in endocytic trafficking of EGF. Involved in transferrin receptor recycling. Regulates the trafficking of endosomal alpha5beta1 integrin to the plasma membrane and involved in invasive cell migration. In T-cells involved in endosome-to-membrane recycling of receptors including T-cell receptor (TCR), CD28 and ITGAL; proposed to be implicated in T-cell proliferation and effector function. In dendritic cells involved in endosome-to-membrane recycling of major histocompatibility complex (MHC) class II probably involving retromer and subsequently allowing antigen sampling, loading and presentation during T-cell activation. Involved in Arp2/3 complex-dependent actin assembly driving Salmonella typhimurium invasion independent of ruffling. Involved in the exocytosis of MMP14 leading to matrix remodeling during invasive migration and implicating late endosome-to-plasma membrane tubular connections and cooperation with the exocyst complex. Involved in negative regulation of autophagy independently from its role in endosomal sorting by inhibiting BECN1 ubiquitination to inactivate PIK3C3/Vps34 activity. The protein is WAS protein family homolog 2 (WASH2P) of Homo sapiens (Human).